Consider the following 681-residue polypeptide: Anaphase-promoting complex subunit 2 (681 aa).

Belongs to the cullin family. In terms of assembly, the APC/C is composed of at least 13 subunits: apc1, apc2, nuc2, apc4, apc5, cut9, apc8, apc10, apc11, hcn1, apc13, apc14 and apc15.

Its function is as follows. Component of the anaphase-promoting complex/cyclosome (APC/C), a cell cycle-regulated E3 ubiquitin-protein ligase complex that controls progression through mitosis and the G1 phase of the cell cycle. The APC/C is thought to confer substrate specificity and, in the presence of ubiquitin-conjugating E2 enzymes, it catalyzes the formation of protein-ubiquitin conjugates that are subsequently degraded by the 26S proteasome. This Schizosaccharomyces pombe (strain 972 / ATCC 24843) (Fission yeast) protein is Anaphase-promoting complex subunit 2 (apc2).